Reading from the N-terminus, the 688-residue chain is PTS system glucoside-specific EIICBA component (688 aa).

The PTS EIIC type-1 domain occupies 3–427 (KKLFGQLQRI…FKLKTPGRED (425 aa)). The next 10 helical transmembrane spans lie at 12–32 (IGKA…LLAF), 81–101 (LGLA…YLIM), 137–157 (LVLG…MGAL), 182–202 (FVPI…SFAW), 223–243 (LTTF…LHHI), 284–304 (AFTT…AFAI), 315–335 (IVGG…ITEP), 340–360 (FLFV…TSFL), 364–384 (LLGV…ILYG), and 395–415 (LVIP…DFAI). The 82-residue stretch at 438-519 (AKLPFDVLDA…AKIMSGEITK (82 aa)) folds into the PTS EIIB type-1 domain. The Phosphocysteine intermediate; for EIIB activity role is filled by Cys-460. One can recognise a PTS EIIA type-1 domain in the interval 560–664 (DQVFAGKMMG…SIVTPMIITN (105 aa)). The Tele-phosphohistidine intermediate; for EIIA activity role is filled by His-612.

The protein resides in the cell membrane. Its function is as follows. The phosphoenolpyruvate-dependent sugar phosphotransferase system (sugar PTS), a major carbohydrate active -transport system, catalyzes the phosphorylation of incoming sugar substrates concomitantly with their translocation across the cell membrane. This system is involved in alpha- and beta-glucoside transport. In Staphylococcus aureus (strain MRSA252), this protein is PTS system glucoside-specific EIICBA component (glcB).